The following is a 301-amino-acid chain: Troponin T, cardiac muscle (301 aa).

2 stretches are compositionally biased toward acidic residues: residues 1 to 42 (MSDL…EEEA) and 50 to 74 (AETEETQAEEDGQEEEDKEDEDGPV). Disordered regions lie at residues 1–99 (MSDL…GERV) and 125–223 (ENRK…KKKK). The residue at position 2 (Ser2) is an N-acetylserine. Phosphoserine; by CK2 is present on Ser2. Residues 82–93 (RPFMPNLVPPKI) are compositionally biased toward pro residues. 2 stretches are compositionally biased toward basic and acidic residues: residues 125–186 (ENRK…DEAR) and 206–223 (QTERKSGKRQTEREKKKK). At Thr207 the chain carries Phosphothreonine; by PKC/PRKCA. A Phosphoserine; by PKC/PRKCA modification is found at Ser211. Phosphothreonine; by PKC/PRKCA and RAF1 is present on Thr216. A Phosphothreonine; by PKC/PRKCA modification is found at Thr297.

It belongs to the troponin T family. As to quaternary structure, binds with troponins I and C to make the thin-filament regulatory complex, troponin. Post-translationally, phosphorylation at Thr-216 by PRKCA induces significant reduction in myofilament calcium sensitivity and actomyosin ATPase activity. As to expression, the major isoform in adult heart is CTNT4.

In terms of biological role, troponin T is the tropomyosin-binding subunit of troponin, the thin filament regulatory complex which confers calcium-sensitivity to striated muscle actomyosin ATPase activity. This is Troponin T, cardiac muscle (TNNT2) from Oryctolagus cuniculus (Rabbit).